The following is a 493-amino-acid chain: Glutamyl-tRNA(Gln) amidotransferase subunit A (493 aa).

Catalysis depends on charge relay system residues lysine 79 and serine 159. Serine 183 acts as the Acyl-ester intermediate in catalysis.

This sequence belongs to the amidase family. GatA subfamily. As to quaternary structure, heterotrimer of A, B and C subunits.

The catalysed reaction is L-glutamyl-tRNA(Gln) + L-glutamine + ATP + H2O = L-glutaminyl-tRNA(Gln) + L-glutamate + ADP + phosphate + H(+). Allows the formation of correctly charged Gln-tRNA(Gln) through the transamidation of misacylated Glu-tRNA(Gln) in organisms which lack glutaminyl-tRNA synthetase. The reaction takes place in the presence of glutamine and ATP through an activated gamma-phospho-Glu-tRNA(Gln). The chain is Glutamyl-tRNA(Gln) amidotransferase subunit A from Brucella abortus (strain S19).